The primary structure comprises 517 residues: MVIANNPILKGFYPDPSICRKGDDFYLVCSSFVYAPGVPIFHTKDLAHFEQIGNILDRESQLPLSGDISRGIFAPTIREHNGIFYMITTNVSSGGNFIVTAKDPAGPWSEPYYLGEDEAPGIDPSLFFDDDGKCYYVGTRPNPDGVRYNGDWEIWVQELDLEQMKLVGPSMAIWKGALKDVIWPEGPHLYKKDGYYYLLHAEAGTSFEHAISVARSKELFKWFEGCPRNPIFTHRNLGKDYPVCNVGHADLVDDINGNWYMVMLASRPCKGKCSLGRETFLAKVIWEDGWPVVNPGVGRLTDEVEMDLPEYRFSKEITTKDKMTFEETVLDDRFVGIERRSEDFYSLTDNPGFLRLKLRPEAIENTGNPSYLGIRQKTHSFRASCGLKFTPAKDNECAGMVLFQNNENHLELLVVKKKDKLQFKVGPVIKGTKIRLATFDISSGDLEIILEAANQLANIYIKKNNEKILVAECIDLSPYTTEESGGFVGCTIGLYASSNGKTSDNYCDYSYFTVEEV.

Asp-15 functions as the Proton acceptor in the catalytic mechanism. Glu-185 acts as the Proton donor in catalysis.

This sequence belongs to the glycosyl hydrolase 43 family.

The enzyme catalyses Hydrolysis of (1-&gt;4)-beta-D-xylans, to remove successive D-xylose residues from the non-reducing termini.. It carries out the reaction Hydrolysis of terminal non-reducing alpha-L-arabinofuranoside residues in alpha-L-arabinosides.. Functionally, has a 1.6-fold higher activity as an arabinosidase than as a beta-xylosidase when tested on the substrates nitrophenyl-beta-D-xylopyranoside and P-nitrophenyl-alpha-L-arabinofuranoside. The polypeptide is Xylosidase/arabinosidase (xylB) (Butyrivibrio fibrisolvens).